Here is a 331-residue protein sequence, read N- to C-terminus: Chitin synthase export chaperone (331 aa).

7 helical membrane passes run 52 to 72 (GAAS…ILHI), 84 to 104 (IITF…IDAG), 113 to 133 (FPWF…SLLV), 150 to 170 (VWLL…ISIL), 184 to 204 (LAMF…YLVM), 219 to 239 (LGHI…MYAF), and 249 to 269 (HYLD…MMVY).

Belongs to the CHS7 family. As to quaternary structure, interacts with chs3.

Its subcellular location is the endoplasmic reticulum membrane. Functionally, chaperone required for the export of the chitin synthase chs3 from the endoplasmic reticulum. The protein is Chitin synthase export chaperone (chs7) of Emericella nidulans (strain FGSC A4 / ATCC 38163 / CBS 112.46 / NRRL 194 / M139) (Aspergillus nidulans).